The sequence spans 265 residues: Bradykinin-potentiating and C-type natriuretic peptides (265 aa).

The N-terminal stretch at 1 to 23 (MVLSRLAASGLLLLALLALSVDG) is a signal peptide. The propeptide occupies 24 to 30 (KPVQQWA). Q31 carries the pyrrolidone carboxylic acid modification. A propeptide spanning residues 44–50 (LKVQQWA) is cleaved from the precursor. Q51 carries the pyrrolidone carboxylic acid modification. The propeptide occupies 64 to 70 (LTVQQWA). Q71 carries the post-translational modification Pyrrolidone carboxylic acid. Residues 81 to 87 (LTVQQWA) constitute a propeptide that is removed on maturation. The residue at position 88 (Q88) is a Pyrrolidone carboxylic acid. Positions 100–106 (LEVQQWA) are excised as a propeptide. Pyrrolidone carboxylic acid is present on Q107. A propeptide spanning residues 118-120 (APL) is cleaved from the precursor. Q121 carries the pyrrolidone carboxylic acid modification. A propeptide is located at residue V126. Residue Q127 is modified to Pyrrolidone carboxylic acid. A propeptide spanning residues 132–241 (LLQPHESPAS…GGARRLKGLA (110 aa)) is cleaved from the precursor. Residues 153–211 (GPEAASGVPSAGAEVGRSGSKAPAAPHRLSKSKGAAATSAASRPMRDLRPDGKQARQNW) form a disordered region. Over residues 184–194 (SKGAAATSAAS) the composition is skewed to low complexity. Basic and acidic residues predominate over residues 196-206 (PMRDLRPDGKQ). C249 and C265 are disulfide-bonded.

In the N-terminal section; belongs to the bradykinin-potentiating peptide family. The protein in the C-terminal section; belongs to the natriuretic peptide family. In terms of tissue distribution, expressed by the venom gland.

The protein localises to the secreted. The protein resides in the cytoplasm. It localises to the cytosol. Functionally, modestly inhibits ACE (with highest affinity for the N-site) and reveals strong bradykinin-potentiating activity. Induces nitric oxide (NO) production depended on muscarinic acetylcholine receptor M1 subtype (CHRM1) and bradykinin B2 receptor (BDKRB2) activation. Both these receptors contribute to the vasodilation induced by this peptide that may have an indirect action on BDKRB2 and a direct agonistic action on CHRM1. In terms of biological role, peptide with several activities. It inhibits the activity of the angiotensin-converting enzyme (ACE) by a preferential interaction with its C-domain. It evokes transient hypotension (-14 mmHg) similar to that evoked by 0.5 ug of bradykinin, when injected alone into rats. It has a high bradykinin-potentiating effect (120%), when 60 nmol of BPP-10c are coinjected with 0.5 ug of bradykinin into rats. Does not affect angiotensin-1 pressor effects. Shows potent and long-lasting antihypertensive activity as well as a reduction of the heart rate. It also binds and dose-dependently promotes the activation of cytosolic argininosuccinate synthase (ASS1), an enzyme that catalyzes the conversion of citrulline, L-aspartate and ATP to argininosuccinate, AMP and pyrophosphate. It also enhances ASS1-dependent arginine production in HEK 293 cells, as well as in spontaneous hypertensive rat (SHR) and Wistar rat plasma. In addition, it induces the production of nitric-oxide (NO) by HUVEC cells via the endothelial nitric-oxide synthase (NOS3), which use arginine as a substrate and produce NO. It has been shown to be internalized by ASS1-expressing endothelial (HUVEC) and kidney (HEK 293) cells, and is detected homogenously distributed within the cell cytoplasm for up to 2 hours. Has a vasorelaxant activity in rat aortic strips and a diuretic potency in anesthetized rats. May act by activating natriuretic receptors (NPR1 and/or NPR2). The protein is Bradykinin-potentiating and C-type natriuretic peptides of Bothrops insularis (Golden lancehead).